Consider the following 1033-residue polypeptide: Immunoglobulin superfamily member 2 (1033 aa).

An N-terminal signal peptide occupies residues 1 to 20 (MACILCVASLFLSLTKFSIG). Residues 21–970 (QREVKIQEGP…VSSLICSSGP (950 aa)) lie on the Extracellular side of the membrane. Ig-like C2-type domains follow at residues 22 to 141 (REVK…TNLT), 144 to 266 (PDTL…TLIT), 279 to 388 (PAAR…TQMG), 408 to 529 (PAAR…QKIS), 539 to 657 (LRVN…ARVS), 670 to 797 (PESK…RKTS), and 806 to 941 (PTGS…KWIN). Residues cysteine 43 and cysteine 121 are joined by a disulfide bond. The N-linked (GlcNAc...) asparagine glycan is linked to asparagine 139. Cysteines 168 and 249 form a disulfide. Positions 253–255 (EWI) match the EWI motif motif. Disulfide bonds link cysteine 304–cysteine 377, cysteine 432–cysteine 509, and cysteine 560–cysteine 638. Asparagine 677 is a glycosylation site (N-linked (GlcNAc...) asparagine). 2 disulfide bridges follow: cysteine 695–cysteine 776 and cysteine 832–cysteine 925. A helical transmembrane segment spans residues 971 to 991 (LLHFLIVCPFVMLLLLATSFL). At 992-1033 (CLYRKARKLSQLSLSAKKEKALWVGMRKTSLQKEAGEESGHY) the chain is on the cytoplasmic side.

N-glycosylated.

Its subcellular location is the membrane. In terms of biological role, plays a role as inhibitor of T-cells proliferation induced by CD3. Inhibits expression of IL2RA on activated T-cells and secretion of IL2. Inhibits tyrosine kinases that are required for IL2 production and cellular proliferation. Inhibits phospholipase C-gamma-1/PLCG1 phosphorylation and subsequent CD3-induced changes in intracellular free calcium. Prevents nuclear translocation of nuclear factor of activated T-cell to the nucleus. Plays a role in the inhibition of T-cell proliferation via IL10 secretion by cutaneous dendritic cells. This is Immunoglobulin superfamily member 2 (Cd101) from Mus musculus (Mouse).